A 341-amino-acid chain; its full sequence is Homeobox protein knotted-1-like 8 (341 aa).

Residues 1-17 (MESFASLAGGGSSSTTA) show a composition bias toward low complexity. 3 disordered regions span residues 1–72 (MESF…AVQG), 121–148 (AAQQ…DQLD), and 187–207 (AESN…SDKQ). Over residues 187–196 (AESNCEGTGS) the composition is skewed to polar residues. The region spanning 207–227 (QLKHQLLRKYGGSLGDLRQVF) is the ELK domain. Residues 228–291 (SKRTKKGKLP…NQRKRHWKPT (64 aa)) constitute a DNA-binding region (homeobox; TALE-type).

This sequence belongs to the TALE/KNOX homeobox family.

The protein resides in the nucleus. Its function is as follows. Probable transcription factor that may be involved in shoot formation during embryogenesis. The chain is Homeobox protein knotted-1-like 8 (OSH43) from Oryza sativa subsp. japonica (Rice).